The chain runs to 303 residues: Methionyl-tRNA formyltransferase (303 aa).

108-111 contacts (6S)-5,6,7,8-tetrahydrofolate; the sequence is SDLP.

It belongs to the Fmt family.

It catalyses the reaction L-methionyl-tRNA(fMet) + (6R)-10-formyltetrahydrofolate = N-formyl-L-methionyl-tRNA(fMet) + (6S)-5,6,7,8-tetrahydrofolate + H(+). Attaches a formyl group to the free amino group of methionyl-tRNA(fMet). The formyl group appears to play a dual role in the initiator identity of N-formylmethionyl-tRNA by promoting its recognition by IF2 and preventing the misappropriation of this tRNA by the elongation apparatus. This chain is Methionyl-tRNA formyltransferase, found in Rickettsia peacockii (strain Rustic).